Here is a 158-residue protein sequence, read N- to C-terminus: Endoribonuclease YbeY (158 aa).

Zn(2+)-binding residues include H119, H123, and H129.

It belongs to the endoribonuclease YbeY family. Zn(2+) is required as a cofactor.

It localises to the cytoplasm. Its function is as follows. Single strand-specific metallo-endoribonuclease involved in late-stage 70S ribosome quality control and in maturation of the 3' terminus of the 16S rRNA. This chain is Endoribonuclease YbeY, found in Acinetobacter baumannii (strain ACICU).